The sequence spans 241 residues: Small ribosomal subunit protein uS2 (241 aa).

The protein belongs to the universal ribosomal protein uS2 family.

This is Small ribosomal subunit protein uS2 from Salmonella choleraesuis (strain SC-B67).